The chain runs to 337 residues: ATP-dependent 6-phosphofructokinase (337 aa).

G11 is a binding site for ATP. Residue 21 to 25 coordinates ADP; sequence RAVVR. Residues 72–73 and 102–105 contribute to the ATP site; these read RY and GDGS. D103 contacts Mg(2+). Residue 125–127 participates in substrate binding; the sequence is TID. Catalysis depends on D127, which acts as the Proton acceptor. R154 serves as a coordination point for ADP. Substrate is bound by residues R162 and 169–171; that span reads MGR. ADP contacts are provided by residues 185-187, K212, and 214-216; these read GAD and KNH. Substrate contacts are provided by residues E223, R245, and 251 to 254; that span reads HILR.

It belongs to the phosphofructokinase type A (PFKA) family. ATP-dependent PFK group I subfamily. Prokaryotic clade 'B1' sub-subfamily. In terms of assembly, homotetramer. Mg(2+) is required as a cofactor.

Its subcellular location is the cytoplasm. It catalyses the reaction beta-D-fructose 6-phosphate + ATP = beta-D-fructose 1,6-bisphosphate + ADP + H(+). It participates in carbohydrate degradation; glycolysis; D-glyceraldehyde 3-phosphate and glycerone phosphate from D-glucose: step 3/4. Its activity is regulated as follows. Allosterically activated by ADP and other diphosphonucleosides, and allosterically inhibited by phosphoenolpyruvate. In terms of biological role, catalyzes the phosphorylation of D-fructose 6-phosphate to fructose 1,6-bisphosphate by ATP, the first committing step of glycolysis. The sequence is that of ATP-dependent 6-phosphofructokinase from Streptococcus pyogenes serotype M3 (strain SSI-1).